Reading from the N-terminus, the 456-residue chain is Protein disulfide-isomerase TMX3 (456 aa).

The signal sequence occupies residues 1–29; sequence MANAVGRRSWAALRLCAAVILLDLAVCKG. Residues 30 to 131 form the Thioredoxin domain; the sequence is FVEDLNESFK…KDDIIEFAHR (102 aa). Residues 30 to 378 are Lumenal-facing; it reads FVEDLNESFK…TIVSIFKSSP (349 aa). Asn35 carries N-linked (GlcNAc...) asparagine glycosylation. Catalysis depends on nucleophile residues Cys56 and Cys59. Cysteines 56 and 59 form a disulfide. 2 N-linked (GlcNAc...) asparagine glycosylation sites follow: Asn261 and Asn316. A helical transmembrane segment spans residues 379–399; it reads LMGCFLFGLPLGVISIMCYGI. The Cytoplasmic segment spans residues 400-456; the sequence is YTADTDGGYIEERYEVSKSEMENQEQIEESKEQESSSGGSLAPTVQEPKDVLEKKKD. Positions 416 to 456 are disordered; the sequence is SKSEMENQEQIEESKEQESSSGGSLAPTVQEPKDVLEKKKD. The segment covering 446–456 has biased composition (basic and acidic residues); the sequence is EPKDVLEKKKD. Residues 453 to 456 carry the Di-lysine motif motif; the sequence is KKKD.

The protein belongs to the protein disulfide isomerase family.

Its subcellular location is the endoplasmic reticulum membrane. It carries out the reaction Catalyzes the rearrangement of -S-S- bonds in proteins.. Probable disulfide isomerase, which participates in the folding of proteins containing disulfide bonds. May act as a dithiol oxidase. Acts as a regulator of endoplasmic reticulum-mitochondria contact sites via its ability to regulate redox signals. The polypeptide is Protein disulfide-isomerase TMX3 (Tmx3) (Mus musculus (Mouse)).